Here is a 50-residue protein sequence, read N- to C-terminus: uncharacterized protein (50 aa).

This is an uncharacterized protein from Sulfolobus islandicus filamentous virus (isolate Iceland/Hveragerdi) (SIFV).